An 834-amino-acid polypeptide reads, in one-letter code: Enhancer of filamentation 1 (834 aa).

One can recognise an SH3 domain in the interval 3–65 (ARNLMARALY…PGNRVKLLIG (63 aa)). A phosphotyrosine mark is found at tyrosine 92, tyrosine 164, tyrosine 166, tyrosine 177, tyrosine 189, tyrosine 214, and tyrosine 223. Serine 296 is subject to Phosphoserine. Phosphotyrosine is present on tyrosine 317. Disordered stretches follow at residues 328–402 (PPAE…DKRL) and 584–624 (SQMP…SERS). The span at 332–344 (TSEKANPEERDGV) shows a compositional bias: basic and acidic residues. Positions 360-363 (DVVD) match the Caspase cleavage related site motif. The span at 368–397 (LSFSSTGSTRSNMSTSSTTSKESSVSASPS) shows a compositional bias: low complexity. Position 369 is a phosphoserine (serine 369). Residues 710–760 (FYYDQCETHYISLLNAIDALFSCVSSAQPPRIFVAHSKFVILSAHKLVFIG) form a divergent helix-loop-helix motif region. The segment at 710-834 (FYYDQCETHY…KRSLLEMATF (125 aa)) is required for interaction with PLK1. Residue serine 780 is modified to Phosphoserine. Threonine 804 carries the post-translational modification Phosphothreonine.

It belongs to the CAS family. Homodimer. Forms heterodimers with BCAR1/p130cas. Forms complexes with PTK2B/RAFTK, adapter protein CRKL and LYN kinase. Part of a complex composed of NEDD9, AURKA and CTTN; within the complex NEDD9 acts as a scaffold protein and is required for complex formation. Part of a ternary complex composed of SMAD3, ITCH/AIP4 and NEDD9/HEF1; within the complex NEDD9/HEF1 interacts (via N-terminus) with ITCH/AIP4; the complex mediates ubiquitination and proteasomal degradation of NEDD9/HEF1. Interacts with ID2. Interacts with CTTN (via N-terminus). Interacts with MICAL. Interacts with TXNL4/DIM1. Interacts with BCAR3 (via Ras-GEF domain). Interacts with SH2D3C isoform 1 and isoform 2. Interacts with BCAR3. Interacts with ECT2. Interacts with PTPN11/SHP-2 (via SH2 domains); the interaction is enhanced when NEDD9/CAS-L is tyrosine phosphorylated. Interacts (via C-terminus) with PLK1 (via polo box domain). Interacts with NKX2-5. Interacts with SMAD3; the interaction is inhibited by oxidation of NEDD9. Interacts with ABL1; interaction is induced by CXCL12-mediated phosphorylation of NEDD/HEF1. Interacts (via SH3 domain) with PTK2/FAK. Interacts with FYN; in the presence of PTK2. Interacts with INPPL1/SHIP2. Post-translationally, polyubiquitinated by ITCH/AIP4, leading to proteasomal degradation. In terms of processing, PTK2/FAK1 phosphorylates the protein at the YDYVHL motif (conserved among all cas proteins) following integrin stimulation. The SRC family kinases (FYN, SRC, LCK and CRK) are recruited to the phosphorylated sites and can phosphorylate other tyrosine residues. Ligation of either integrin beta-1 or B-cell antigen receptor on tonsillar B-cells and B-cell lines promotes tyrosine phosphorylation and both integrin and BCR-mediated tyrosine phosphorylation requires an intact actin network. Phosphorylation is required to recruit NEDD9 to T-cell receptor microclusters at the periphery of newly formed immunological synapses. In fibroblasts transformation with oncogene v-ABL results in an increase in tyrosine phosphorylation. Transiently phosphorylated following CD3 cross-linking and this phosphorylated form binds to CRKL and C3G. A mutant lacking the SH3 domain is phosphorylated upon CD3 cross-linking but not upon integrin beta-1 cross-linking. Tyrosine phosphorylation occurs upon stimulation of the G-protein coupled C1a calcitonin receptor. Calcitonin-stimulated tyrosine phosphorylation is mediated by calcium- and protein kinase C-dependent mechanisms and requires the integrity of the actin cytoskeleton. Phosphorylation at Ser-369 induces proteasomal degradation. Phosphorylated by LYN. Phosphorylation at Ser-780 by CSNK1D or CSNK1E, or phosphorylation of Thr-804 by CSNK1E enhances the interaction of NEDD9 with PLK1.

The protein localises to the cytoplasm. It is found in the cell cortex. It localises to the nucleus. The protein resides in the golgi apparatus. Its subcellular location is the cell projection. The protein localises to the lamellipodium. It is found in the cell junction. It localises to the focal adhesion. The protein resides in the cytoskeleton. Its subcellular location is the spindle pole. The protein localises to the cilium. It is found in the cilium basal body. It localises to the basolateral cell membrane. Negatively regulates embryonic fibroblast migration. May play an important role in integrin beta-1 or B cell antigen receptor (BCR) mediated signaling in B- and T-cells. Integrin beta-1 stimulation leads to recruitment of various proteins including CRKl and SHPTP2 to the tyrosine phosphorylated form. Promotes adhesion and migration of lymphocytes; as a result required for the correct migration of lymphocytes to the spleen and other secondary lymphoid organs. Plays a role in the organization of T-cell F-actin cortical cytoskeleton and the centralization of T-cell receptor microclusters at the immunological synapse. Negatively regulates cilia outgrowth in polarized cysts. Modulates cilia disassembly via activation of AURKA-mediated phosphorylation of HDAC6 and subsequent deacetylation of alpha-tubulin. In conjunction with NKX2-5, positively regulates transcription of genes such as COL3A1 and MMP2, resulting in increased pulmonary endothelial fibrosis in response to hypoxia. Positively regulates RANKL-induced osteoclastogenesis. Required for the maintenance of hippocampal dendritic spines in the dentate gyrus and CA1 regions, thereby involved in spatial learning and memory. This Canis lupus familiaris (Dog) protein is Enhancer of filamentation 1.